The following is a 163-amino-acid chain: 3-isopropylmalate dehydratase small subunit (163 aa).

The protein belongs to the LeuD family. LeuD type 2 subfamily. In terms of assembly, heterodimer of LeuC and LeuD.

It carries out the reaction (2R,3S)-3-isopropylmalate = (2S)-2-isopropylmalate. It participates in amino-acid biosynthesis; L-leucine biosynthesis; L-leucine from 3-methyl-2-oxobutanoate: step 2/4. Functionally, catalyzes the isomerization between 2-isopropylmalate and 3-isopropylmalate, via the formation of 2-isopropylmaleate. The protein is 3-isopropylmalate dehydratase small subunit of Brachyspira hyodysenteriae (strain ATCC 49526 / WA1).